Reading from the N-terminus, the 431-residue chain is Trigger factor (431 aa).

In terms of domain architecture, PPIase FKBP-type spans 165 to 250; it reads GDTVVIDFDG…IHELKRKELP (86 aa).

This sequence belongs to the FKBP-type PPIase family. Tig subfamily.

Its subcellular location is the cytoplasm. It carries out the reaction [protein]-peptidylproline (omega=180) = [protein]-peptidylproline (omega=0). Its function is as follows. Involved in protein export. Acts as a chaperone by maintaining the newly synthesized protein in an open conformation. Functions as a peptidyl-prolyl cis-trans isomerase. The polypeptide is Trigger factor (Leuconostoc citreum (strain KM20)).